Consider the following 175-residue polypeptide: Universal stress protein A-like protein (175 aa).

Residues A11, V12, N13, S26, C27, V53, G131, R133, T145, V146, and S147 each coordinate AMP.

Belongs to the universal stress protein A family. Homohexamer.

This chain is Universal stress protein A-like protein, found in Arabidopsis thaliana (Mouse-ear cress).